The sequence spans 480 residues: Voltage-gated potassium channel regulatory subunit KCNG2 (480 aa).

Disordered regions lie at residues 1-25 and 144-167; these read MARL…GRGG and AAEA…LGSG. Over 1 to 187 the chain is Cytoplasmic; that stretch reads MARLPGHPEV…DVVENPHSGL (187 aa). The helical transmembrane segment at 188–209 threads the bilayer; sequence AGKLFAYVSVAFVAVTAVGLCL. Residues 210–230 lie on the Extracellular side of the membrane; it reads STMPDVRAEEERGECSTKCRN. The chain crosses the membrane as a helical span at residues 231–252; that stretch reads LFVLETVCVAWFSFEFLLRSLQ. Topologically, residues 253 to 263 are cytoplasmic; the sequence is AESKCAFLRTP. The chain crosses the membrane as a helical span at residues 264–284; sequence LAIIDILAILPFYVSLLAGLA. Residues 285–296 are Extracellular-facing; that stretch reads AGPTGSKMLERA. The chain crosses the membrane as a helical; Voltage-sensor span at residues 297–317; sequence GLVLRLLRALRVLYVMRLARH. Over 318–332 the chain is Cytoplasmic; sequence SLGLRSLGLTVRRCA. The chain crosses the membrane as a helical span at residues 333–354; sequence REFGLLLLFLCVAMALFAPLVH. The Extracellular portion of the chain corresponds to 355–369; the sequence is LAERELGAHRDFSSV. Residues 370–381 constitute an intramembrane region (helical); it reads PASYWWAVISMT. A Selectivity filter motif is present at residues 382–387; it reads TVGYGD. The stretch at 382–389 is an intramembrane region; that stretch reads TVGYGDMV. Residues 390 to 396 are Extracellular-facing; the sequence is PRSLPGQ. The chain crosses the membrane as a helical span at residues 397–425; sequence VVALSSILSGILLMAFPVTSIFHTFSRSY. Residues 426–480 are Cytoplasmic-facing; it reads SELKEQQQRAASPEPVLREDSTRDDSTRSASATEDSSQDPETAGAAGSLPGPVGP. Residues 429 to 480 form a disordered region; the sequence is KEQQQRAASPEPVLREDSTRDDSTRSASATEDSSQDPETAGAAGSLPGPVGP. Positions 441–452 are enriched in basic and acidic residues; that stretch reads VLREDSTRDDST.

It belongs to the potassium channel family. G (TC 1.A.1.2) subfamily. Kv6.2/KCNG2 sub-subfamily. As to quaternary structure, heterodimer with KCNB1. As to expression, highly expressed in heart, in particular in right and left atrium, and detected at lower levels in the right and left ventricle.

The protein resides in the cell membrane. Regulatory alpha-subunit of the voltage-gated potassium (Kv) channel which, when coassembled with KCNB1, can modulate the kinetics and conductance-voltage relationship. Modulates channel activity by shifting the threshold and the half-maximal activation to more negative values. Potassium channel subunit that does not form functional channels by itself. This Rattus norvegicus (Rat) protein is Voltage-gated potassium channel regulatory subunit KCNG2.